Consider the following 521-residue polypeptide: Histone deacetylase HDAC1 (521 aa).

Residues 7 to 319 (KRVCYYYDSD…WTYETSVALA (313 aa)) are histone deacetylase. H139 is an active-site residue. The disordered stretch occupies residues 376–521 (GVQIQAIPED…GAKGAKENNI (146 aa)). A compositionally biased stretch (acidic residues) spans 386-395 (AINDESDDED). Phosphoserine is present on S391. Residues 396–414 (KVDKDDRLPQSDKDKRIVP) show a composition bias toward basic and acidic residues. 3 positions are modified to phosphoserine: S419, S421, and S455. Phosphothreonine is present on T457. Residues 459 to 470 (SEIKDEKEKGDG) show a composition bias toward basic and acidic residues. Residues 476–502 (STASNTNSNNNSNNKSDNDAGATANAG) are compositionally biased toward low complexity. The span at 503-513 (SGSGSGSGAGA) shows a compositional bias: gly residues.

It belongs to the histone deacetylase family. HD type 1 subfamily. As to quaternary structure, component of a form of the Esc/E(z) complex present specifically during early embryogenesis which is composed of Caf1-55, esc, E(z), Su(z)12, Pcl and HDAC1. The Esc/E(z) complex may also associate with Pcl and HDAC1 during early embryogenesis. This complex is distinct from the PRC1 complex, which contains many other PcG proteins like Pc, Ph, Psc, Su(z)2. The 2 complexes however cooperate and interact together during the first 3 hours of development to establish PcG silencing. Interacts with the histone methyltransferase Su(var)3-9. Component of a complex that contains at least HDAC1, CoRest and Su(var)3-3/Hdm. Component of the DREAM complex at least composed of Myb, Caf1-55, mip40, mip120, mip130, E2f2, Dp, Rbf, Rbf2, lin-52, HDAC1 and l(3)mbt. Interacts with the chromatin-remodeler Mi-2. Interacts with Rrp6.

It is found in the nucleus. It carries out the reaction N(6)-acetyl-L-lysyl-[histone] + H2O = L-lysyl-[histone] + acetate. Catalyzes the deacetylation of lysine residues on the N-terminal part of the core histones (H2A, H2B, H3 and H4). Histone deacetylation may constitute a tag for epigenetic repression and plays an important role in transcriptional regulation, cell cycle progression and developmental events. For instance, deacetylation of histone H3 may be a prerequisite for the subsequent recruitment of the histone methyltransferase Su(var)3-9 to histones. Involved in position-effect variegation (PEV). In the larval brain, part of a regulatory network including the transcriptional repressors klu, dpn and E(spl)mgamma-HLH which is required for type II neuroblast self-renewal and for maintaining erm in an inactive state in intermediate neural progenitors (INP). The sequence is that of Histone deacetylase HDAC1 from Drosophila melanogaster (Fruit fly).